Reading from the N-terminus, the 179-residue chain is Translation initiation factor IF-3 (179 aa).

This sequence belongs to the IF-3 family. As to quaternary structure, monomer.

The protein resides in the cytoplasm. Functionally, IF-3 binds to the 30S ribosomal subunit and shifts the equilibrium between 70S ribosomes and their 50S and 30S subunits in favor of the free subunits, thus enhancing the availability of 30S subunits on which protein synthesis initiation begins. The protein is Translation initiation factor IF-3 of Zymomonas mobilis subsp. mobilis (strain ATCC 31821 / ZM4 / CP4).